An 85-amino-acid polypeptide reads, in one-letter code: Anti-neuroexcitation peptide 3 (85 aa).

The N-terminal stretch at 1–21 (MKLSLLLVISASMLIDGLVNA) is a signal peptide. An LCN-type CS-alpha/beta domain is found at 22–82 (DGYIRGSNGC…TWKSESNTCG (61 aa)). Cystine bridges form between Cys31/Cys81, Cys35/Cys56, Cys42/Cys63, and Cys46/Cys65.

It belongs to the long (4 C-C) scorpion toxin superfamily. Sodium channel inhibitor family. Beta subfamily. In terms of tissue distribution, expressed by the venom gland.

It is found in the secreted. In terms of biological role, binds to sodium channels (Nav) and inhibits them. Recombinant ANEP delays the convulsion seizure of model animals by 18% and shows anti-neuroexcitatory activity. This chain is Anti-neuroexcitation peptide 3, found in Olivierus martensii (Manchurian scorpion).